The primary structure comprises 689 residues: MTTQNFLAEIGTEELPPKALKKLATAFAENVENELNQAGLTFEKVQWFAAPRRLAVKVLNLATSQPTKEIEKRGPAVSAAFDAEGKPTKAAEGWARGCGITVEQAERLATDKGEWLVHRATIEGQPTKNLMLDIVTRSLANLPIPKMMRWGDKTEQFVRPVHTVSLLLGGELIEGEILGIASGRTIRGHRFLGEAEFQIAHADEYPQILKDKGSVIADFNERRAIILADSQAKASALGGVADIEDDLLDEVTSLVEFPNVLTATFEERFLAVPAEALVYTMKGDQKYFPIYDKNGKLLPHFIFVSNINPTDPTPIIEGNEKVVRPRLSDAEFFFNTDKKQRLEDLLPRLETVLFQQQLGTLLDKTKRIQALAGEIATQIGADKAKAERAGLLSKCDLMTNMVFEFTDTQGVMGMHYARHDGEDEEVAVALNEQYMPRFAGDNLPNSLVASSVALADKFDTLTGIFGIGQAPKGSADPFALRRAALGALRIIVEKNLPLDLAEIVKKSTALFADRLTNQNVVDDVVDFMLGRFRAWYQDEGIAVDVIQAVLARRPTKPADFDARVRAVSHFRTLDSAEALAAANKRVSNILAKIEGEISSKIDRTLLLEPEEKALAEQVLALQSELAPLFAKGEYQPALDRLAGLREVIDNFFDKVMVNAEDEKLRQNRQAILNTLRNLFLQVADISLLQ.

The protein belongs to the class-II aminoacyl-tRNA synthetase family. As to quaternary structure, tetramer of two alpha and two beta subunits.

The protein resides in the cytoplasm. The enzyme catalyses tRNA(Gly) + glycine + ATP = glycyl-tRNA(Gly) + AMP + diphosphate. This is Glycine--tRNA ligase beta subunit from Mannheimia succiniciproducens (strain KCTC 0769BP / MBEL55E).